A 201-amino-acid chain; its full sequence is Small ribosomal subunit protein uS4c (201 aa).

The segment at 15–43 is disordered; that stretch reads LGALPGLTRKTPKSGSNQKKKFHSGKKEQ. Positions 89 to 150 constitute an S4 RNA-binding domain; it reads MRLDNILFRL…NQRSKRLVQN (62 aa).

The protein belongs to the universal ribosomal protein uS4 family. Part of the 30S ribosomal subunit. Contacts protein S5. The interaction surface between S4 and S5 is involved in control of translational fidelity.

Its subcellular location is the plastid. The protein resides in the chloroplast. One of the primary rRNA binding proteins, it binds directly to 16S rRNA where it nucleates assembly of the body of the 30S subunit. Its function is as follows. With S5 and S12 plays an important role in translational accuracy. In Sorghum bicolor (Sorghum), this protein is Small ribosomal subunit protein uS4c (rps4).